Here is a 353-residue protein sequence, read N- to C-terminus: UPF0283 membrane protein YcjF (353 aa).

The span at 1–19 (MSEPLKPRIDFAEPLKEEP) shows a compositional bias: basic and acidic residues. Positions 1 to 48 (MSEPLKPRIDFAEPLKEEPTSAFKAQQTFSEAESHTFAPAAIDERPED) are disordered. The Periplasmic portion of the chain corresponds to 1 to 69 (MSEPLKPRID…LRPKRSLWRK (69 aa)). The chain crosses the membrane as a helical span at residues 70–90 (MVMGGLALFGASVVGQGVQWT). Over 91–99 (MNAWQTQDW) the chain is Cytoplasmic. The chain crosses the membrane as a helical span at residues 100-120 (VALGGCAAGALIVGAGVGSVV). The Periplasmic segment spans residues 121–212 (TEWWRLWRLR…ARREISRFAA (92 aa)). A helical membrane pass occupies residues 213-233 (ESTLMIAVSPLALVDMAFIAW). Topologically, residues 234 to 353 (RNLRLINRIA…LQKSKSSPEK (120 aa)) are cytoplasmic.

It belongs to the UPF0283 family.

The protein localises to the cell inner membrane. In Salmonella typhi, this protein is UPF0283 membrane protein YcjF (ycjF).